The chain runs to 323 residues: MNALPPAIFLMGPTAAGKTDLAIELSKVLPCELISVDSALVYRGMDIGTAKPSKAQLAEFPHRLIDILDPAQSYSAADFRSDALAAMAQITARGNIPLLVGGTMLYFKALLDGLADMPAANAAVRAQLEADAQAFGWQSLHDQLAVVDPVSAARIHPNDPQRLIRALEVYRVSGMSMTAHREQQTAQSTEAAASGCQQLPYTVANLAIAPADRKVLHQRIALRFEQMLDQGFLDEVLALRSRGDLHAGLPSIRAVGYRQVWDHLDGKLTREEMQERGIIATRQLAKRQFTWLRSWDDLHWLDSLASDNLSRALKYLGSVSILS.

12 to 19 (GPTAAGKT) contributes to the ATP binding site. Residue 14–19 (TAAGKT) participates in substrate binding. Interaction with substrate tRNA regions lie at residues 37 to 40 (DSAL) and 161 to 165 (QRLIR).

It belongs to the IPP transferase family. In terms of assembly, monomer. Mg(2+) serves as cofactor.

It catalyses the reaction adenosine(37) in tRNA + dimethylallyl diphosphate = N(6)-dimethylallyladenosine(37) in tRNA + diphosphate. Its function is as follows. Catalyzes the transfer of a dimethylallyl group onto the adenine at position 37 in tRNAs that read codons beginning with uridine, leading to the formation of N6-(dimethylallyl)adenosine (i(6)A). In Pseudomonas syringae pv. tomato (strain ATCC BAA-871 / DC3000), this protein is tRNA dimethylallyltransferase.